Here is a 314-residue protein sequence, read N- to C-terminus: Protein phosphatase PTC7 homolog fig (314 aa).

In terms of domain architecture, PPM-type phosphatase spans 43-309 (PYLVTVVQGR…DDITLILSSV (267 aa)). Mn(2+) contacts are provided by Asp-87, Gly-88, and Asp-232.

It belongs to the PP2C family. The cofactor is Mg(2+). It depends on Mn(2+) as a cofactor.

It catalyses the reaction O-phospho-L-seryl-[protein] + H2O = L-seryl-[protein] + phosphate. The enzyme catalyses O-phospho-L-threonyl-[protein] + H2O = L-threonyl-[protein] + phosphate. In Drosophila melanogaster (Fruit fly), this protein is Protein phosphatase PTC7 homolog fig.